Consider the following 200-residue polypeptide: Large ribosomal subunit protein uL4 (200 aa).

A disordered region spans residues 43–67; it reads RAQKTRAEVSGSGKKPWRQKGTGRA.

This sequence belongs to the universal ribosomal protein uL4 family. In terms of assembly, part of the 50S ribosomal subunit.

One of the primary rRNA binding proteins, this protein initially binds near the 5'-end of the 23S rRNA. It is important during the early stages of 50S assembly. It makes multiple contacts with different domains of the 23S rRNA in the assembled 50S subunit and ribosome. Its function is as follows. Forms part of the polypeptide exit tunnel. The protein is Large ribosomal subunit protein uL4 of Haemophilus influenzae (strain PittEE).